The sequence spans 404 residues: Probable tRNA sulfurtransferase (404 aa).

Residues 61 to 166 (EAISERLKDV…SGYSYIMCGE (106 aa)) form the THUMP domain. ATP contacts are provided by residues 184 to 185 (LL), 209 to 210 (HF), arginine 266, glycine 288, and glutamine 297.

Belongs to the ThiI family.

The protein resides in the cytoplasm. It catalyses the reaction [ThiI sulfur-carrier protein]-S-sulfanyl-L-cysteine + a uridine in tRNA + 2 reduced [2Fe-2S]-[ferredoxin] + ATP + H(+) = [ThiI sulfur-carrier protein]-L-cysteine + a 4-thiouridine in tRNA + 2 oxidized [2Fe-2S]-[ferredoxin] + AMP + diphosphate. The catalysed reaction is [ThiS sulfur-carrier protein]-C-terminal Gly-Gly-AMP + S-sulfanyl-L-cysteinyl-[cysteine desulfurase] + AH2 = [ThiS sulfur-carrier protein]-C-terminal-Gly-aminoethanethioate + L-cysteinyl-[cysteine desulfurase] + A + AMP + 2 H(+). Its pathway is cofactor biosynthesis; thiamine diphosphate biosynthesis. Its function is as follows. Catalyzes the ATP-dependent transfer of a sulfur to tRNA to produce 4-thiouridine in position 8 of tRNAs, which functions as a near-UV photosensor. Also catalyzes the transfer of sulfur to the sulfur carrier protein ThiS, forming ThiS-thiocarboxylate. This is a step in the synthesis of thiazole, in the thiamine biosynthesis pathway. The sulfur is donated as persulfide by IscS. The polypeptide is Probable tRNA sulfurtransferase (Bacillus cereus (strain G9842)).